A 460-amino-acid chain; its full sequence is MIKGSSLKRIKSLVMMAIFSVSIITTAIVSSAADQIPFPYNATYPYGAYSCLADSQSSANNLLKSEWEQWKSAHITSNGARGYKRVQRDASTNYDTVSEGLGYGMLLAVYFGEQQLFDDLYRYVKVFLNSNGLMSWRIDANGNIMGQNAIGAATDADEDIAVSLVFAHKKWGTSGGFNYQTEAKNYINNIYNKMVEPGTYVLKPGDMWGGSDVTNPSYFAPAWYRIFADFTGNSGWINVANKCYEIADKARNSNTGLVPDWCTANGTPASGQGYDFYYDAIRYQWRTAIDYSWYGTAKAKTHCDAISNFFKNIGYPNIKDGYTLSGSQISANHTATFVSCAAAAAMTGTDATYAKNIYNECVKVKDTGNYTYFGNTLRMMILLYTTGNFPNLYSYSSQPQQGLKGDVNNDGAIDALDIAALKKAILTQSTSNINLTNADMNNDGNIDAIDFAQLKVKLLN.

The N-terminal stretch at M1–A32 is a signal peptide. The active-site Proton donor is the E99. The active-site Nucleophile is the D155. Residues Q400 to N460 form the Dockerin domain.

The protein belongs to the glycosyl hydrolase 8 (cellulase D) family.

The catalysed reaction is Endohydrolysis of (1-&gt;4)-beta-D-glucosidic linkages in cellulose, lichenin and cereal beta-D-glucans.. This chain is Endoglucanase 2 (celB), found in Ruminiclostridium josui (Clostridium josui).